A 391-amino-acid chain; its full sequence is Cyclin-A1 (391 aa).

The protein belongs to the cyclin family. Cyclin AB subfamily. In terms of assembly, interacts with the CDK1 and the CDK2 protein kinases to form a serine/threonine kinase holoenzyme complex. The cyclin subunit imparts substrate specificity to the complex.

It is found in the nucleus. Its function is as follows. May be involved in the control of the cell cycle at the G1/S (start) and G2/M (mitosis) transitions. The protein is Cyclin-A1 (ccna1) of Carassius auratus (Goldfish).